Here is a 278-residue protein sequence, read N- to C-terminus: Biotin synthase (278 aa).

The Radical SAM core domain maps to methionine 1–arginine 227. 3 residues coordinate [4Fe-4S] cluster: cysteine 16, cysteine 20, and cysteine 23. [2Fe-2S] cluster-binding residues include cysteine 60, cysteine 95, and cysteine 153.

Belongs to the radical SAM superfamily. Biotin synthase family. Homodimer. It depends on [4Fe-4S] cluster as a cofactor. Requires [2Fe-2S] cluster as cofactor.

The catalysed reaction is (4R,5S)-dethiobiotin + (sulfur carrier)-SH + 2 reduced [2Fe-2S]-[ferredoxin] + 2 S-adenosyl-L-methionine = (sulfur carrier)-H + biotin + 2 5'-deoxyadenosine + 2 L-methionine + 2 oxidized [2Fe-2S]-[ferredoxin]. It participates in cofactor biosynthesis; biotin biosynthesis; biotin from 7,8-diaminononanoate: step 2/2. In terms of biological role, catalyzes the conversion of dethiobiotin (DTB) to biotin by the insertion of a sulfur atom into dethiobiotin via a radical-based mechanism. This Campylobacter jejuni subsp. jejuni serotype O:23/36 (strain 81-176) protein is Biotin synthase.